A 217-amino-acid polypeptide reads, in one-letter code: Ribonuclease T (217 aa).

The region spanning 20-194 (VVIDIETAGF…YDTQQTANLF (175 aa)) is the Exonuclease domain. Mg(2+) contacts are provided by Asp-23, Glu-25, His-181, and Asp-186. His-181 (proton donor/acceptor) is an active-site residue.

The protein belongs to the RNase T family. As to quaternary structure, homodimer. The cofactor is Mg(2+).

Trims short 3' overhangs of a variety of RNA species, leaving a one or two nucleotide 3' overhang. Responsible for the end-turnover of tRNA: specifically removes the terminal AMP residue from uncharged tRNA (tRNA-C-C-A). Also appears to be involved in tRNA biosynthesis. The polypeptide is Ribonuclease T (Buchnera aphidicola subsp. Baizongia pistaciae (strain Bp)).